Here is a 144-residue protein sequence, read N- to C-terminus: uncharacterized protein (144 aa).

This is an uncharacterized protein from Vibrio parahaemolyticus serotype O3:K6 (strain RIMD 2210633).